Reading from the N-terminus, the 428-residue chain is Proline--tRNA ligase (428 aa).

The protein belongs to the class-II aminoacyl-tRNA synthetase family. ProS type 2 subfamily. In terms of assembly, homodimer.

The protein localises to the cytoplasm. It catalyses the reaction tRNA(Pro) + L-proline + ATP = L-prolyl-tRNA(Pro) + AMP + diphosphate. Functionally, catalyzes the attachment of proline to tRNA(Pro) in a two-step reaction: proline is first activated by ATP to form Pro-AMP and then transferred to the acceptor end of tRNA(Pro). The chain is Proline--tRNA ligase from Rickettsia typhi (strain ATCC VR-144 / Wilmington).